A 258-amino-acid chain; its full sequence is Heat-labile enterotoxin A chain (258 aa).

The signal sequence occupies residues 1–18 (MKNITFIFFILLASPLYA). 25–39 (RADSRPPDEIKRSGG) is an NAD(+) binding site. Glu-130 is an active-site residue. The cysteines at positions 205 and 217 are disulfide-linked.

The protein belongs to the enterotoxin A family. In terms of assembly, heterohexamer of one A chain and of five B chains.

Its function is as follows. The biological activity of the toxin is produced by the A chain, which activates intracellular adenyl cyclase. The polypeptide is Heat-labile enterotoxin A chain (eltA) (Escherichia coli).